The sequence spans 434 residues: GTPase Obg (434 aa).

In terms of domain architecture, Obg spans 1–159 (MQFIDRCQIK…KTVRLELKYL (159 aa)). Residues 160–329 (ANVGIVGYPN…LVDRVFDLYQ (170 aa)) enclose the OBG-type G domain. GTP-binding positions include 166–173 (GYPNAGKS), 191–195 (FTTLV), 212–215 (DIPG), 282–285 (NKMD), and 310–312 (ISA). Positions 173 and 193 each coordinate Mg(2+). Residues 356–434 (EKTIDDDPLD…ICDYEYLIDE (79 aa)) form the OCT domain.

It belongs to the TRAFAC class OBG-HflX-like GTPase superfamily. OBG GTPase family. As to quaternary structure, monomer. The cofactor is Mg(2+).

The protein localises to the cytoplasm. An essential GTPase which binds GTP, GDP and possibly (p)ppGpp with moderate affinity, with high nucleotide exchange rates and a fairly low GTP hydrolysis rate. Plays a role in control of the cell cycle, stress response, ribosome biogenesis and in those bacteria that undergo differentiation, in morphogenesis control. This chain is GTPase Obg, found in Mycoplasmoides gallisepticum (strain R(low / passage 15 / clone 2)) (Mycoplasma gallisepticum).